The sequence spans 330 residues: Aspartate--ammonia ligase (330 aa).

Belongs to the class-II aminoacyl-tRNA synthetase family. AsnA subfamily.

The protein resides in the cytoplasm. It carries out the reaction L-aspartate + NH4(+) + ATP = L-asparagine + AMP + diphosphate + H(+). Its pathway is amino-acid biosynthesis; L-asparagine biosynthesis; L-asparagine from L-aspartate (ammonia route): step 1/1. The protein is Aspartate--ammonia ligase of Treponema pallidum (strain Nichols).